A 282-amino-acid chain; its full sequence is 4-diphosphocytidyl-2-C-methyl-D-erythritol kinase (282 aa).

Residue Lys-11 is part of the active site. An ATP-binding site is contributed by 93 to 103; it reads LVSAGLAGGSA. Asp-133 is an active-site residue.

This sequence belongs to the GHMP kinase family. IspE subfamily.

The catalysed reaction is 4-CDP-2-C-methyl-D-erythritol + ATP = 4-CDP-2-C-methyl-D-erythritol 2-phosphate + ADP + H(+). Its pathway is isoprenoid biosynthesis; isopentenyl diphosphate biosynthesis via DXP pathway; isopentenyl diphosphate from 1-deoxy-D-xylulose 5-phosphate: step 3/6. Its function is as follows. Catalyzes the phosphorylation of the position 2 hydroxy group of 4-diphosphocytidyl-2C-methyl-D-erythritol. This is 4-diphosphocytidyl-2-C-methyl-D-erythritol kinase from Ehrlichia canis (strain Jake).